Reading from the N-terminus, the 426-residue chain is MINKSIIRNDFKTLETSLKNRNSKLDISSLKDLDKKQSELLLIIESCNKKRNEISKSIGIYIGKKDNKKVDELKKEMESIKNTLETTNEELKTISAKVDDILLSIPNIPDSSVPIGKSEDENVEIKKWGTPTKFDFNHKAHWDLITDLDIGDFERATKVTGSRFFIYKGLGSKLMRALQMLTLDINTSNGYLEMSLPVIVNSASLTSTGQLPKFKEDLFALENSDYYLSPTLEVQLTNYYRNEILEESALPMKFTASSLNFRSEAGSAGKDTRGIIRQHQFYKTELVNLVHPEKSYQALEEMTLNAESILEALELPYRRILLCTGDMGFSSSKTYDIEVWLPSYNSYKEISSCSNCLDFQARRSMIRFKNSKTNKNELVHTLNGSSLALDRLFAAVVENYQNKDGSITIPKALVKYMGIDSIKKTK.

231-233 lines the L-serine pocket; the sequence is TLE. 262-264 lines the ATP pocket; sequence RSE. Position 285 (E285) interacts with L-serine. 349–352 is a binding site for ATP; the sequence is EISS. S385 contributes to the L-serine binding site.

Belongs to the class-II aminoacyl-tRNA synthetase family. Type-1 seryl-tRNA synthetase subfamily. As to quaternary structure, homodimer. The tRNA molecule binds across the dimer.

It localises to the cytoplasm. It carries out the reaction tRNA(Ser) + L-serine + ATP = L-seryl-tRNA(Ser) + AMP + diphosphate + H(+). It catalyses the reaction tRNA(Sec) + L-serine + ATP = L-seryl-tRNA(Sec) + AMP + diphosphate + H(+). Its pathway is aminoacyl-tRNA biosynthesis; selenocysteinyl-tRNA(Sec) biosynthesis; L-seryl-tRNA(Sec) from L-serine and tRNA(Sec): step 1/1. Its function is as follows. Catalyzes the attachment of serine to tRNA(Ser). Is also able to aminoacylate tRNA(Sec) with serine, to form the misacylated tRNA L-seryl-tRNA(Sec), which will be further converted into selenocysteinyl-tRNA(Sec). The polypeptide is Serine--tRNA ligase (Malacoplasma penetrans (strain HF-2) (Mycoplasma penetrans)).